The chain runs to 223 residues: Small ribosomal subunit protein uS3 (223 aa).

One can recognise a KH type-2 domain in the interval 39-107 (VREFLHKKLA…PVQINIEEVR (69 aa)).

This sequence belongs to the universal ribosomal protein uS3 family. As to quaternary structure, part of the 30S ribosomal subunit. Forms a tight complex with proteins S10 and S14.

Its function is as follows. Binds the lower part of the 30S subunit head. Binds mRNA in the 70S ribosome, positioning it for translation. The chain is Small ribosomal subunit protein uS3 from Francisella tularensis subsp. holarctica (strain FTNF002-00 / FTA).